We begin with the raw amino-acid sequence, 483 residues long: Argininosuccinate lyase (483 aa).

The protein belongs to the lyase 1 family. Argininosuccinate lyase subfamily.

The protein resides in the cytoplasm. It catalyses the reaction 2-(N(omega)-L-arginino)succinate = fumarate + L-arginine. Its pathway is amino-acid biosynthesis; L-arginine biosynthesis; L-arginine from L-ornithine and carbamoyl phosphate: step 3/3. This is Argininosuccinate lyase from Archaeoglobus fulgidus (strain ATCC 49558 / DSM 4304 / JCM 9628 / NBRC 100126 / VC-16).